Consider the following 230-residue polypeptide: 3-beta-hydroxysteroid-Delta(8),Delta(7)-isomerase (230 aa).

The residue at position 2 (threonine 2) is an N-acetylthreonine. 4 helical membrane-spanning segments follow: residues 29–49 (WHILVGLFSFSGVLIVITWLL), 66–86 (LCWFAVCTFIHLVIEGWFSFY), 121–141 (MESVTACLWGPLSLWVVIAFL), and 185–205 (FWFYFVIMNAIWLVIPGILVF). In terms of domain architecture, EXPERA spans 61-204 (GRRLALCWFA…IWLVIPGILV (144 aa)).

Belongs to the EBP family. As to expression, expressed in liver.

The protein localises to the endoplasmic reticulum membrane. It localises to the nucleus envelope. It is found in the cytoplasmic vesicle. It carries out the reaction lathosterol = 5alpha-cholest-8-en-3beta-ol. The enzyme catalyses zymosterol = 5alpha-cholesta-7,24-dien-3beta-ol. The catalysed reaction is 5,6alpha-epoxy-5alpha-cholestan-3beta-ol + H2O = 5alpha-cholestane-3beta,5,6beta-triol. It catalyses the reaction 5,6beta-epoxy-5beta-cholestan-3beta-ol + H2O = 5alpha-cholestane-3beta,5,6beta-triol. It participates in steroid biosynthesis; cholesterol biosynthesis. Enzymatic activity is induced by 25-hydroxycholesterol, cholestyramine and lovastatin. Isomerase that catalyzes the conversion of Delta(8)-sterols to their corresponding Delta(7)-isomers. In terms of biological role, component of the microsomal antiestrogen binding site (AEBS), a multiproteic complex at the ER membrane that consists of an association between EBP and 7-dehydrocholesterol reductase/DHCR7. This complex is responsible for cholesterol-5,6-epoxide hydrolase (ChEH) activity, which consists in the hydration of cholesterol-5,6-epoxides (5,6-EC) into cholestane-3beta,5alpha,6beta-triol (CT). The precise role of each component of this complex has not been described yet. This Rattus norvegicus (Rat) protein is 3-beta-hydroxysteroid-Delta(8),Delta(7)-isomerase.